A 301-amino-acid polypeptide reads, in one-letter code: Probable alpha-L-glutamate ligase (301 aa).

The 184-residue stretch at 104–287 (LQLLARKGVG…VAGMIINWTE (184 aa)) folds into the ATP-grasp domain. ATP-binding positions include Lys-141, 178 to 179 (EF), Asp-187, and 211 to 213 (RSN). Positions 248, 260, and 262 each coordinate Mg(2+). Residues Asp-248, Glu-260, and Asn-262 each coordinate Mn(2+).

Belongs to the RimK family. The cofactor is Mg(2+). Mn(2+) is required as a cofactor.

The sequence is that of Probable alpha-L-glutamate ligase from Marinobacter nauticus (strain ATCC 700491 / DSM 11845 / VT8) (Marinobacter aquaeolei).